We begin with the raw amino-acid sequence, 528 residues long: Cytochrome P450 monooxygenase polB (528 aa).

The helical transmembrane segment at 3 to 23 (SFFLVCPVAFLGFTICYLVYV) threads the bilayer. Residue Cys-473 participates in heme binding.

Belongs to the cytochrome P450 family. Heme is required as a cofactor.

It localises to the membrane. The enzyme catalyses 4beta-carboxyl motiol + reduced [NADPH--hemoprotein reductase] + O2 = 2alpha-hydroxyl, 4beta-carboxyl motiol + oxidized [NADPH--hemoprotein reductase] + H2O + H(+). It carries out the reaction 2-deoxypolytolypin + reduced [NADPH--hemoprotein reductase] + O2 = polytolypin + oxidized [NADPH--hemoprotein reductase] + H2O + H(+). It functions in the pathway secondary metabolite biosynthesis; terpenoid biosynthesis. In terms of biological role, cytochrome P450 monooxygenase; part of the gene cluster that mediates the biosynthesis of antifungal fernane-type triterpenoid polytolypin. PolB acts as a hydroxylase and installs the 2-alpha-hydroxyl group in polytolypin. Within the pathway, the triterpene cyclase polA first catalyzes the cyclization of 2,3-oxidosqualene to motiol, polC converts the 4-alpha-methyl group of motiol to a carboxyl group, polB is responsible for appending a hydroxyl group at the 2-alpha position and polE is a dual functional P450, which can catalyze the formation of both the 1-beta-hydroxyl group and 10-beta-carboxyl group. This chain is Cytochrome P450 monooxygenase polB, found in Polytolypa hystricis (strain UAMH7299).